A 281-amino-acid polypeptide reads, in one-letter code: 3-hydroxyanthranilate 3,4-dioxygenase (281 aa).

Residues 1–162 (MSGVTAIEIP…SNEFKTGKPG (162 aa)) are domain A (catalytic). Arg45 provides a ligand contact to O2. Fe cation-binding residues include His49, Glu55, and His93. Glu55 lines the substrate pocket. The substrate site is built by Arg97 and Glu107. The segment at 163–179 (KGTFACNAPYEARWTDL) is linker. The segment at 180–281 (PVPINRKEFI…GFAITIRMPA (102 aa)) is domain B.

The protein belongs to the 3-HAO family. It depends on Fe(2+) as a cofactor.

Its subcellular location is the cytoplasm. It carries out the reaction 3-hydroxyanthranilate + O2 = (2Z,4Z)-2-amino-3-carboxymuconate 6-semialdehyde. It participates in cofactor biosynthesis; NAD(+) biosynthesis; quinolinate from L-kynurenine: step 3/3. Catalyzes the oxidative ring opening of 3-hydroxyanthranilate to 2-amino-3-carboxymuconate semialdehyde, which spontaneously cyclizes to quinolinate. In Caenorhabditis elegans, this protein is 3-hydroxyanthranilate 3,4-dioxygenase (haao-1).